Consider the following 290-residue polypeptide: uncharacterized protein (290 aa).

Disordered stretches follow at residues 105-156 (LKHK…KLTV) and 259-290 (EGAQ…KSKK). Over residues 114-130 (KATQQARKRNFISSKSK) the composition is skewed to polar residues. Basic and acidic residues-rich tracts occupy residues 143-156 (RESK…KLTV) and 261-280 (AQRD…EPVL).

This is an uncharacterized protein from Homo sapiens (Human).